Here is a 180-residue protein sequence, read N- to C-terminus: DNA-directed RNA polymerase subunit Rpo7 (180 aa).

The 84-residue stretch at 82–165 (QEVVEGEVLQ…RLPRIALTMR (84 aa)) folds into the S1 motif domain.

It belongs to the eukaryotic RPB7/RPC8 RNA polymerase subunit family. As to quaternary structure, part of the 13-subunit RNA polymerase complex. Forms a stalk with Rpo4 that extends from the main structure.

The protein resides in the cytoplasm. The enzyme catalyses RNA(n) + a ribonucleoside 5'-triphosphate = RNA(n+1) + diphosphate. DNA-dependent RNA polymerase (RNAP) catalyzes the transcription of DNA into RNA using the four ribonucleoside triphosphates as substrates. The highly mobile Rpo4/Rpo7 heterodimer is conditionally required for transcription initiation. The polypeptide is DNA-directed RNA polymerase subunit Rpo7 (Saccharolobus shibatae (strain ATCC 51178 / DSM 5389 / JCM 8931 / NBRC 15437 / B12) (Sulfolobus shibatae)).